The chain runs to 285 residues: Acetyl-coenzyme A carboxylase carboxyl transferase subunit beta (285 aa).

Positions 29-285 constitute a CoA carboxyltransferase N-terminal domain; sequence IMTKCPKCKK…ILKIHQEVTK (257 aa). Residues C33, C36, C52, and C55 each contribute to the Zn(2+) site. The C4-type zinc finger occupies 33–55; that stretch reads CPKCKKIMYTKELAENLNVCFNC.

Belongs to the AccD/PCCB family. Acetyl-CoA carboxylase is a heterohexamer composed of biotin carboxyl carrier protein (AccB), biotin carboxylase (AccC) and two subunits each of ACCase subunit alpha (AccA) and ACCase subunit beta (AccD). Zn(2+) is required as a cofactor.

The protein resides in the cytoplasm. The enzyme catalyses N(6)-carboxybiotinyl-L-lysyl-[protein] + acetyl-CoA = N(6)-biotinyl-L-lysyl-[protein] + malonyl-CoA. It participates in lipid metabolism; malonyl-CoA biosynthesis; malonyl-CoA from acetyl-CoA: step 1/1. Component of the acetyl coenzyme A carboxylase (ACC) complex. Biotin carboxylase (BC) catalyzes the carboxylation of biotin on its carrier protein (BCCP) and then the CO(2) group is transferred by the transcarboxylase to acetyl-CoA to form malonyl-CoA. This is Acetyl-coenzyme A carboxylase carboxyl transferase subunit beta from Staphylococcus aureus (strain MSSA476).